Reading from the N-terminus, the 398-residue chain is Phosphoglycerate kinase (398 aa).

Substrate is bound by residues 23-25, arginine 38, 61-64, arginine 120, and arginine 153; these read DLN and HFGR. ATP is bound by residues lysine 203, glutamate 325, and 355-358; that span reads GGDT.

Belongs to the phosphoglycerate kinase family. In terms of assembly, monomer.

The protein resides in the cytoplasm. The enzyme catalyses (2R)-3-phosphoglycerate + ATP = (2R)-3-phospho-glyceroyl phosphate + ADP. Its pathway is carbohydrate degradation; glycolysis; pyruvate from D-glyceraldehyde 3-phosphate: step 2/5. The sequence is that of Phosphoglycerate kinase from Mesorhizobium japonicum (strain LMG 29417 / CECT 9101 / MAFF 303099) (Mesorhizobium loti (strain MAFF 303099)).